Here is a 254-residue protein sequence, read N- to C-terminus: MKKVTLFLFVVSLLPSTVLAWNTPGEDFSGELKLEGAVTSTRNPWVWKVGQGNESLEVKQSRGVRDGEQGIPVALPALTVLLGKTTLTTPAGREGLSPGVSYGKGAEGFSLEWTAPGMAKVTLPVTGDKNVRAGTFTFRMQAAGVLRHMQDGQPVYTGVYDDLNANGLPGESTAMKTSDIPGTLQTMFSGEGPSWLQTMTVSGYSGVSHFSDASLRQVEGVYGAQIVAGGGELHLNGAMPERWRVSLPVSIEYQ.

Residues 1–20 (MKKVTLFLFVVSLLPSTVLA) form the signal peptide.

Belongs to the fimbrial K88 protein family.

The protein resides in the fimbrium. Its function is as follows. K88 minor fimbrial subunit, plays an essential role in the biogenesis of the K88 fimbriae. Fimbriae (also called pili), are polar filaments radiating from the surface of the bacterium to a length of 0.5-1.5 micrometers and numbering 100-300 per cell. They enable bacteria to colonize the epithelium of specific host organs. This is K88 minor fimbrial subunit FaeI (faeI) from Escherichia coli.